The chain runs to 638 residues: Chaperone protein DnaK (638 aa).

Threonine 200 is modified (phosphothreonine; by autocatalysis). The interval 598 to 621 (SLHMAATAEQQSGSTGAGAGASAK) is disordered.

It belongs to the heat shock protein 70 family.

Acts as a chaperone. The chain is Chaperone protein DnaK from Xylella fastidiosa (strain M23).